A 230-amino-acid chain; its full sequence is Ribose-5-phosphate isomerase A (230 aa).

Substrate contacts are provided by residues T32–T35, D85–D88, and K98–G101. The active-site Proton acceptor is E107. Substrate is bound at residue K125.

The protein belongs to the ribose 5-phosphate isomerase family. Homodimer.

It carries out the reaction aldehydo-D-ribose 5-phosphate = D-ribulose 5-phosphate. Its pathway is carbohydrate degradation; pentose phosphate pathway; D-ribose 5-phosphate from D-ribulose 5-phosphate (non-oxidative stage): step 1/1. Functionally, catalyzes the reversible conversion of ribose-5-phosphate to ribulose 5-phosphate. The chain is Ribose-5-phosphate isomerase A from Burkholderia ambifaria (strain ATCC BAA-244 / DSM 16087 / CCUG 44356 / LMG 19182 / AMMD) (Burkholderia cepacia (strain AMMD)).